Reading from the N-terminus, the 469-residue chain is Ribulose bisphosphate carboxylase large chain (469 aa).

Position 5 is an N6,N6,N6-trimethyllysine (Lys-5). Asn-114 and Thr-164 together coordinate substrate. The Proton acceptor role is filled by Lys-166. Residue Lys-168 coordinates substrate. Residues Lys-192, Asp-194, and Glu-195 each coordinate Mg(2+). Lys-192 carries the N6-carboxylysine modification. His-285 (proton acceptor) is an active-site residue. 3 residues coordinate substrate: Arg-286, His-318, and Ser-370.

It belongs to the RuBisCO large chain family. Type I subfamily. In terms of assembly, heterohexadecamer of 8 large chains and 8 small chains; disulfide-linked. The disulfide link is formed within the large subunit homodimers. Mg(2+) is required as a cofactor. Post-translationally, the disulfide bond which can form in the large chain dimeric partners within the hexadecamer appears to be associated with oxidative stress and protein turnover.

The protein localises to the plastid. It is found in the chloroplast. It carries out the reaction 2 (2R)-3-phosphoglycerate + 2 H(+) = D-ribulose 1,5-bisphosphate + CO2 + H2O. The enzyme catalyses D-ribulose 1,5-bisphosphate + O2 = 2-phosphoglycolate + (2R)-3-phosphoglycerate + 2 H(+). In terms of biological role, ruBisCO catalyzes two reactions: the carboxylation of D-ribulose 1,5-bisphosphate, the primary event in carbon dioxide fixation, as well as the oxidative fragmentation of the pentose substrate in the photorespiration process. Both reactions occur simultaneously and in competition at the same active site. The chain is Ribulose bisphosphate carboxylase large chain from Fleroya rubrostipulata (Mitragyna rubrostipulata).